Here is a 436-residue protein sequence, read N- to C-terminus: MGQVLPLVTRQGDRIAIVSGLRTPFARQATAFHGIPAVDLGKMVVGELLARTEIPAEVIEQLVFGQVVQMPEAPNIAREIVLGTGMNVHTDAYSVSRACATSFQAVANVAESLMAGTIRAGIAGGADSSSVLPIGVSKKLARVLVDVNKARTMSQRLKLFSRLRLRDLMPVPPAVAEYSTGLRMGDTAEQMAKTYGITREQQDALAHRSHQRAAQAWSEGKLKEEVMTAFIPPYKQPLVEDNNIRGNSSLADYAKLRPAFDRKHGTVTAANSTPLTDGAAAVILMTESRAKELGLVPLGYLRSYAFTAIDVWQDMLLGPAWSTPLALERAGLTMGDLTLIDMHEAFAAQTLANIQLLGSERFARDVLGRAHATGEVDESKFNVLGGSIAYGHPFAATGARMITQTLHELRRRGGGFGLVTACAAGGLGAAMVLEAE.

The Acyl-thioester intermediate role is filled by cysteine 99. Catalysis depends on proton acceptor residues histidine 392 and cysteine 422.

The protein belongs to the thiolase-like superfamily. Thiolase family. As to quaternary structure, heterotetramer of two alpha chains (FadJ) and two beta chains (FadI).

The protein localises to the cytoplasm. The catalysed reaction is an acyl-CoA + acetyl-CoA = a 3-oxoacyl-CoA + CoA. The protein operates within lipid metabolism; fatty acid beta-oxidation. Functionally, catalyzes the final step of fatty acid oxidation in which acetyl-CoA is released and the CoA ester of a fatty acid two carbons shorter is formed. This Escherichia coli O1:K1 / APEC protein is 3-ketoacyl-CoA thiolase.